Here is a 177-residue protein sequence, read N- to C-terminus: Prorelaxin (177 aa).

An N-terminal signal peptide occupies residues 1-25 (MLRWFLSHLLGVWLLLSQLPREIPA). Disulfide bonds link C34–C164, C46–C177, and C163–C168. Positions 63–149 (QISEPLAEVV…KSLSKLDKHP (87 aa)) are cleaved as a propeptide — connecting peptide.

It belongs to the insulin family. In terms of assembly, heterodimer of a B chain and an A chain linked by two disulfide bonds. In terms of tissue distribution, placenta; syncytiotrophoblast.

The protein resides in the secreted. Functionally, relaxin is an ovarian hormone that acts with estrogen to produce dilatation of the birth canal in many mammals. This Canis lupus familiaris (Dog) protein is Prorelaxin (RLN).